The sequence spans 986 residues: Ankyrin repeat, PH and SEC7 domain containing protein secG (986 aa).

Residues M1–K28 show a composition bias toward low complexity. The segment at M1–S43 is disordered. The span at H29–S43 shows a compositional bias: polar residues. 15 ANK repeats span residues P34–D63, E68–I97, A101–T131, K135–A164, N168–A197, D201–P230, H234–C263, E267–M296, M300–D329, R334–I363, E367–I396, Q400–V429, Q433–A462, H466–A495, and A499–Q528. The 191-residue stretch at Q580–N770 folds into the SEC7 domain. In terms of domain architecture, PH spans H784–H895. Residues I911 to S986 form a disordered region. A compositionally biased stretch (polar residues) spans K920–I929. Low complexity-rich tracts occupy residues T936 to S953 and S963 to S986.

In Dictyostelium discoideum (Social amoeba), this protein is Ankyrin repeat, PH and SEC7 domain containing protein secG (secG).